The following is a 208-amino-acid chain: Probable Brix domain-containing ribosomal biogenesis protein (208 aa).

Residues 1–196 (MMLITTSHRP…IWIMEDGRRW (196 aa)) enclose the Brix domain.

Probably involved in the biogenesis of the ribosome. This chain is Probable Brix domain-containing ribosomal biogenesis protein, found in Thermococcus kodakarensis (strain ATCC BAA-918 / JCM 12380 / KOD1) (Pyrococcus kodakaraensis (strain KOD1)).